The sequence spans 357 residues: Chorismate synthase (357 aa).

NADP(+) is bound at residue Arg47. FMN is bound by residues 123–125 (RSS), Gly281, 296–300 (KPTSS), and Arg324.

Belongs to the chorismate synthase family. Homotetramer. FMNH2 serves as cofactor.

It carries out the reaction 5-O-(1-carboxyvinyl)-3-phosphoshikimate = chorismate + phosphate. Its pathway is metabolic intermediate biosynthesis; chorismate biosynthesis; chorismate from D-erythrose 4-phosphate and phosphoenolpyruvate: step 7/7. In terms of biological role, catalyzes the anti-1,4-elimination of the C-3 phosphate and the C-6 proR hydrogen from 5-enolpyruvylshikimate-3-phosphate (EPSP) to yield chorismate, which is the branch point compound that serves as the starting substrate for the three terminal pathways of aromatic amino acid biosynthesis. This reaction introduces a second double bond into the aromatic ring system. The sequence is that of Chorismate synthase from Chlamydia muridarum (strain MoPn / Nigg).